The primary structure comprises 313 residues: Putative S-adenosyl-L-methionine-dependent methyltransferase MAV_4573 (313 aa).

S-adenosyl-L-methionine is bound by residues aspartate 129 and 158–159; that span reads DL.

Belongs to the UPF0677 family.

Exhibits S-adenosyl-L-methionine-dependent methyltransferase activity. In Mycobacterium avium (strain 104), this protein is Putative S-adenosyl-L-methionine-dependent methyltransferase MAV_4573.